The primary structure comprises 365 residues: Phosphate acyltransferase (365 aa).

The protein belongs to the PlsX family. Homodimer. Probably interacts with PlsY.

Its subcellular location is the cytoplasm. The enzyme catalyses a fatty acyl-[ACP] + phosphate = an acyl phosphate + holo-[ACP]. Its pathway is lipid metabolism; phospholipid metabolism. Catalyzes the reversible formation of acyl-phosphate (acyl-PO(4)) from acyl-[acyl-carrier-protein] (acyl-ACP). This enzyme utilizes acyl-ACP as fatty acyl donor, but not acyl-CoA. In Jannaschia sp. (strain CCS1), this protein is Phosphate acyltransferase.